The sequence spans 346 residues: Serine/threonine-protein phosphatase PP1(5.9) (346 aa).

The Mn(2+) site is built by Asp-102, His-104, Asp-130, and Asn-162. His-163 (proton donor) is an active-site residue. Residues His-211 and His-287 each contribute to the Mn(2+) site.

It belongs to the PPP phosphatase family. PP-1 subfamily. The cofactor is Mn(2+).

The enzyme catalyses O-phospho-L-seryl-[protein] + H2O = L-seryl-[protein] + phosphate. It catalyses the reaction O-phospho-L-threonyl-[protein] + H2O = L-threonyl-[protein] + phosphate. This Trypanosoma brucei brucei protein is Serine/threonine-protein phosphatase PP1(5.9).